The following is an 87-amino-acid chain: Small ribosomal subunit protein bS20 (87 aa).

A disordered region spans residues 1–23 (MANHKSAIKRHKQSVKRAARNRA).

This sequence belongs to the bacterial ribosomal protein bS20 family.

Its function is as follows. Binds directly to 16S ribosomal RNA. This Oleidesulfovibrio alaskensis (strain ATCC BAA-1058 / DSM 17464 / G20) (Desulfovibrio alaskensis) protein is Small ribosomal subunit protein bS20.